The sequence spans 298 residues: MSDNPFRSGFVSIIGRPNVGKSTLLNRILGEKIVITSDKPQTTRNRIQGIHNVPGAQIVFIDTPGIHQARSRLNKYMVEVALSAIREVDLVLFLVEANQKPGEQEQEIIDVLAGATAPVFLVINKVDLTEKGAVLERIAAYKDRYPFREIVPISAGTGDGVDHLVELVRKALPQGPVYFPDDILTDVPERFIAAEIIREKVFRMTRDEVPYATAVEVDSFKEREDGGLVSIAATITVERDSQKGIIIGKKGAMLKKIGSAARVEIEKLLNTKVFLELFVRVRKDWSEDERMLKELGYT.

Residues 7-174 (RSGFVSIIGR…VELVRKALPQ (168 aa)) enclose the Era-type G domain. Residues 15–22 (GRPNVGKS) form a G1 region. 15–22 (GRPNVGKS) provides a ligand contact to GTP. The interval 41–45 (QTTRN) is G2. The interval 62-65 (DTPG) is G3. GTP-binding positions include 62-66 (DTPGI) and 124-127 (NKVD). Residues 124-127 (NKVD) form a G4 region. The G5 stretch occupies residues 153–155 (ISA). Residues 205-283 (TRDEVPYATA…FLELFVRVRK (79 aa)) form the KH type-2 domain.

This sequence belongs to the TRAFAC class TrmE-Era-EngA-EngB-Septin-like GTPase superfamily. Era GTPase family. Monomer.

It is found in the cytoplasm. The protein resides in the cell inner membrane. Its function is as follows. An essential GTPase that binds both GDP and GTP, with rapid nucleotide exchange. Plays a role in 16S rRNA processing and 30S ribosomal subunit biogenesis and possibly also in cell cycle regulation and energy metabolism. The chain is GTPase Era from Geobacter metallireducens (strain ATCC 53774 / DSM 7210 / GS-15).